Consider the following 416-residue polypeptide: Homeobox protein ceh-62 (416 aa).

Over residues 103–113 (TPTPIIATPSI) the composition is skewed to low complexity. Disordered regions lie at residues 103–144 (TPTP…QATR) and 178–247 (FQNR…FPPT). Positions 118–127 (QPLQSPSAPN) are enriched in polar residues. Residues 130-189 (SRRKRTTFSPEQATRLEAEYIGDSYMAREKRHLLAQSLKLSENQVKTWFQNRRAKDKRDR) constitute a DNA-binding region (homeobox). Residues 193–218 (NASNHTSNSRRSSPSRKSSSDSTPTP) are compositionally biased toward low complexity. Positions 219-240 (TQATQFDMPTQIQTASPPTTAD) are enriched in polar residues.

The protein localises to the nucleus. In Caenorhabditis elegans, this protein is Homeobox protein ceh-62.